The primary structure comprises 87 residues: Small ribosomal subunit protein bS20 (87 aa).

The segment at 1 to 24 (MANTAQARKRARQSVERNKHNSSL) is disordered.

The protein belongs to the bacterial ribosomal protein bS20 family.

In terms of biological role, binds directly to 16S ribosomal RNA. The chain is Small ribosomal subunit protein bS20 from Bordetella petrii (strain ATCC BAA-461 / DSM 12804 / CCUG 43448).